A 1076-amino-acid chain; its full sequence is Nickel and cobalt resistance protein CnrA (1076 aa).

The next 12 helical transmembrane spans lie at 14–34, 366–386, 390–410, 418–438, 475–495, 502–522, 561–581, 903–923, 928–948, 959–979, 1003–1023, and 1035–1055; these read WLVLFLTAVVAVIGAWQLNLL, TVAKNLIEGALLVVAILFALL, RAATIAALVIPLSLLVSAIGM, NLMSLGALDFGLIIDGAVIIV, PTVYGQLVIFMVFLPCLTFQG, SPMVITLMLALASAFVLSLTF, PMPFIGAGIATVAVATVAFTF, RLAIIVPLCFILIAATLYMAI, LTATVLTAVPLALAGGVFALL, AVGFIAVSGVAVLNGLVLISA, RPVLMTALVASLGFVPMAIAT, and TVVIGGLVTATVLTLFVLPAL.

The protein belongs to the resistance-nodulation-cell division (RND) (TC 2.A.6) family.

Its subcellular location is the cell inner membrane. In terms of biological role, the products of the genes cnrA, cnrB, and cnrC are likely to form a membrane-bound protein complex catalyzing an energy-dependent efflux of Ni(2+) and Co(2+). The mechanism of action of the CnrCBA complex may be that of a proton/cation antiporter. The sequence is that of Nickel and cobalt resistance protein CnrA (cnrA) from Cupriavidus metallidurans (strain ATCC 43123 / DSM 2839 / NBRC 102507 / CH34) (Ralstonia metallidurans).